The chain runs to 1226 residues: MGKDEGIPVRVALRCRPLVPKENNEGCKMCLTFVPGEQQVIVGTEKSFTYDYVFDPSAEQEEVYNSAVAPLIKGLFKGYNATVLAYGQTGSGKTYSMGGAYTHNQENEPTVGVIPRTVIALFREIHQRPEWEFNLKVSYLEIYNEEILDLLYAARDKTNTISIREDPKEGIKICGLTERDVKTALDTLSCLEQGNSSRTVASTAMNSQSSRSHAIFTISIEQRKEGDKNNSFRSKLHLVDLAGSERQKKTKAEGDRLKEGISINRGLLCLGNVISALGDESKKGGFVPYRDSKLTRLLQDSLGGNSHTLMIACVSPADSNMEETLNTLRYADRARKIKNKPIVNTDPQAAELQRLKLQVQELQVLLLQAHGGTLPVLNSMEPSENLQSLMERNKNLEKENGKLSRELGEAAVQTAQFLEKIIMTEQQNEKLGSKMEELKQHAACKVNLQRLVETLEDQELKDNVEVIQNLQQVIVQLQDESSGIAGSIEAMDEEAASFPVPEEDSGEKRSSDGFTTNHALRQAQLSKELIELNKALVMKEALAKKMAQNDRQLEPIQSEYLNNIKHLESEVGVLQKEKEELILALHSAKKDNNQAKLSERRRKRLQELEGQMTELKKKLGEQSKLLKLRESTEKTVAKMNQEIQGMKMQRVQLMRQMKEDAEKFRTWKQQKTKEVIQLKEKDRKRQYELLKLERDFQKQANVLRRKTEEAASANKRLKEALQRQKEAMEKRKDSQSKGMEGAASRVKNWLANEVEVLVSTEEAQRHLNDLLEDRKILAQDIAQLKQKTDAGERIPTKIRRRTYTVAELENLEEEASVTKQIESLETEMELRSAQIADLQQKLLDADGEEEMVKRRWETISNIMEAKCALKYLITELVSSKVAGSKLESSVKQNRAHVADLQKNIFEERNQMAEMETEHQSQLMQLEQHHQEKILYLLSQLQQKQASVPVTIEELPAEEITEREKQLMERLKFQDEEIEKMKALCEKNQQLLQENDMYKQKLALLHVASGKKLHNILPAAEICSPDSPFDFIPPKPRGKRRTNAKSAAVILEDLLSESESEEESDDKNWEPGNNSKQSKKLTSKCSCKARCGNKMCGCRKTKQNCSDDCFCDPSKCRNRDNHMDEGKHEDQSLESENSKIDYPDVTAGGSFFTPPCVTPTKKVLREISDIGQVLSIKLQRKPSTASASASVMESQENQTSILTKKKKVLCNSNTSFFSGCSAITEDE.

Residues 8–337 (PVRVALRCRP…LRYADRARKI (330 aa)) enclose the Kinesin motor domain. Residue 87-94 (GQTGSGKT) coordinates ATP. Positions 351–1006 (ELQRLKLQVQ…YKQKLALLHV (656 aa)) form a coiled coil. Positions 494–505 (EAASFPVPEEDS) are enriched in acidic residues. Disordered regions lie at residues 494 to 516 (EAASFPVPEEDSGEKRSSDGFTT), 722 to 741 (QRQKEAMEKRKDSQSKGMEG), and 1052 to 1078 (DLLSESESEEESDDKNWEPGNNSKQSK). Over residues 722–735 (QRQKEAMEKRKDSQ) the composition is skewed to basic and acidic residues. The interval 1007-1226 (ASGKKLHNIL…SGCSAITEDE (220 aa)) is globular. Acidic residues predominate over residues 1053–1064 (LLSESESEEESD).

Belongs to the TRAFAC class myosin-kinesin ATPase superfamily. Kinesin family. Chromokinesin subfamily. The cofactor is [2Fe-2S] cluster. [4Fe-4S] cluster serves as cofactor. As to expression, expressed in oocytes, eggs, testes and brain.

Its subcellular location is the nucleus. The protein resides in the chromosome. It is found in the cytoplasm. It localises to the cytoskeleton. Functionally, iron-sulfur (Fe-S) cluster binding motor protein that has a role in chromosome segregation during mitosis. Required for mitotic chromosomal positioning and bipolar spindle stabilization. This is Chromosome-associated kinesin KIF4 (kif4) from Xenopus laevis (African clawed frog).